The primary structure comprises 889 residues: Coatomer subunit beta' (889 aa).

6 WD repeats span residues 11–41, 53–83, 95–125, 138–169, 182–214, and 226–256; these read NRSD…ELWN, VTET…RVFN, AHPD…KLWN, GHEH…KVWS, GQER…KIWD, and GHMS…KIWN. S326 bears the Phosphoserine mark. Residues 806-889 form a disordered region; it reads CGAEGLPGSS…AVPEPVEEES (84 aa). Over residues 836–864 the composition is skewed to basic and acidic residues; it reads DENKEAEVEDSEFKESNSEAVEAEKKEEE. Residues 866 to 879 show a composition bias toward low complexity; sequence PQQQQSEQQPEQGE.

This sequence belongs to the WD repeat COPB2 family. In terms of assembly, oligomeric complex that consists of at least the alpha, beta, beta', gamma, delta, epsilon and zeta subunits. Interacts with the ESCRT-0 subunit VPS27.

The protein localises to the cytoplasm. It localises to the golgi apparatus membrane. It is found in the cytoplasmic vesicle. Its subcellular location is the COPI-coated vesicle membrane. Functionally, the coatomer is a cytosolic protein complex that binds to dilysine motifs and reversibly associates with Golgi non-clathrin-coated vesicles, which further mediate biosynthetic protein transport from the ER, via the Golgi up to the trans Golgi network. Coatomer complex is required for budding from Golgi membranes, and is essential for the retrograde Golgi-to-ER transport of dilysine-tagged proteins. The polypeptide is Coatomer subunit beta' (SEC27) (Saccharomyces cerevisiae (strain ATCC 204508 / S288c) (Baker's yeast)).